A 234-amino-acid chain; its full sequence is Glutathione S-transferase sirG (234 aa).

Residues 15 to 99 form the GST N-terminal domain; it reads LYVVKATPTS…YLTDAYDHEG (85 aa). The GST C-terminal domain occupies 105-230; the sequence is DLWERTQVNN…KALSQKFRPS (126 aa).

The protein belongs to the GST superfamily.

It carries out the reaction RX + glutathione = an S-substituted glutathione + a halide anion + H(+). It participates in mycotoxin biosynthesis. In terms of biological role, glutathione S-transferase; part of the gene cluster that mediates the biosynthesis of sirodesmin PL, an epipolythiodioxopiperazine (ETP) characterized by a disulfide bridged cyclic dipeptide and that acts as a phytotoxin which is involved in the blackleg didease of canola. SirD catalyzes the O-prenylation of L-tyrosine (L-Tyr) in the presence of dimethylallyl diphosphate (DMAPP) to yield 4-O-dimethylallyl-L-Tyr, and therefore represents probably the first pathway-specific enzyme in the biosynthesis of sirodesmin PL. 4-O-dimethylallyl-L-Tyr, then undergoes condensation with L-Ser in a reaction catalyzed by the non-ribosomal peptide synthase sirP to form the diketopiperazine (DKP) backbone. Further bishydroxylation of the DKP performed by the cytochrome P450 monooxygenase sirC leads to the production of the intermediate phomamide. This step is essential to form the reactive thiol group required for toxicity of sirodesmin PL. The next steps of sirodesmin biosynthesis are not well understood yet, but some predictions could be made from intermediate compounds identification. Phomamide is converted into phomalizarine via oxidation, probably by sirT. Further oxidation, methylation (by sirM or sirN) and reduction steps convert phomalizarine to deacetyl sirodesmin. Finally, acetyltransferase sirH probably acetylates deacetyl sirodesmin to produce sirodesmin PL. The chain is Glutathione S-transferase sirG from Leptosphaeria maculans (Blackleg fungus).